A 148-amino-acid polypeptide reads, in one-letter code: tRNA-specific adenosine deaminase (148 aa).

Positions M1–A116 constitute a CMP/dCMP-type deaminase domain. Position 48 (H48) interacts with Zn(2+). Residue E50 is the Proton donor of the active site. Residues C78 and C81 each coordinate Zn(2+).

This sequence belongs to the cytidine and deoxycytidylate deaminase family. In terms of assembly, homodimer. It depends on Zn(2+) as a cofactor.

The enzyme catalyses adenosine(34) in tRNA + H2O + H(+) = inosine(34) in tRNA + NH4(+). Its function is as follows. Catalyzes the deamination of adenosine to inosine at the wobble position 34 of tRNA(Arg2). The protein is tRNA-specific adenosine deaminase of Rickettsia typhi (strain ATCC VR-144 / Wilmington).